Reading from the N-terminus, the 457-residue chain is L-lysine-epsilon aminotransferase (457 aa).

The pyridoxal 5'-phosphate site is built by glycine 131 and alanine 132. 2-oxoglutarate contacts are provided by arginine 172 and glutamine 278. Arginine 172 provides a ligand contact to L-lysine. Glutamine 278 serves as a coordination point for pyridoxal 5'-phosphate. Lysine 304 carries the N6-(pyridoxal phosphate)lysine modification. 2-oxoglutarate is bound at residue arginine 427.

This sequence belongs to the class-III pyridoxal-phosphate-dependent aminotransferase family. In terms of assembly, monomer. It depends on pyridoxal 5'-phosphate as a cofactor.

The enzyme catalyses L-lysine + 2-oxoglutarate = (S)-2-amino-6-oxohexanoate + L-glutamate. Its pathway is antibiotic biosynthesis; cephamycin C biosynthesis. Its activity is regulated as follows. Activity is induced in the presence of high concentrations of lysine, but not by L-alpha-aminoadipic acid. Not repressed by ammonium ions. In terms of biological role, catalyzes the transfer of the terminal amino group of L-lysine to alpha-ketoglutarate to yield L-glutamate and 2-aminoadipate 6-semialdehyde ((S)-2-amino-6-oxohexanoate), which is spontaneously converted to the dehydrated form 1-piperideine 6-carboxylate. Shows a high specificity for L-lysine as substrate although L-ornithine can also be used, leading to the formation of an o-aminobenzaldehyde reactive compound. Only cis-oxaloacetate and pyruvate can replace alpha-ketoglutarate, but with very low efficiency. The protein is L-lysine-epsilon aminotransferase of Streptomyces clavuligerus.